Consider the following 184-residue polypeptide: Holliday junction branch migration complex subunit RuvA (184 aa).

Residues 1–64 form a domain I region; the sequence is MIVAVEGIIT…EDADLLYGFL (64 aa). The tract at residues 65–145 is domain II; the sequence is DEKEKRMFEM…ANDGEQYKIE (81 aa). E145 is a region of interest (flexible linker). The tract at residues 145–184 is domain III; sequence ETISALENLGFKRDKINKILLNCKSTNTADLIKEALKKLA.

This sequence belongs to the RuvA family. Homotetramer. Forms an RuvA(8)-RuvB(12)-Holliday junction (HJ) complex. HJ DNA is sandwiched between 2 RuvA tetramers; dsDNA enters through RuvA and exits via RuvB. An RuvB hexamer assembles on each DNA strand where it exits the tetramer. Each RuvB hexamer is contacted by two RuvA subunits (via domain III) on 2 adjacent RuvB subunits; this complex drives branch migration. In the full resolvosome a probable DNA-RuvA(4)-RuvB(12)-RuvC(2) complex forms which resolves the HJ.

It is found in the cytoplasm. In terms of biological role, the RuvA-RuvB-RuvC complex processes Holliday junction (HJ) DNA during genetic recombination and DNA repair, while the RuvA-RuvB complex plays an important role in the rescue of blocked DNA replication forks via replication fork reversal (RFR). RuvA specifically binds to HJ cruciform DNA, conferring on it an open structure. The RuvB hexamer acts as an ATP-dependent pump, pulling dsDNA into and through the RuvAB complex. HJ branch migration allows RuvC to scan DNA until it finds its consensus sequence, where it cleaves and resolves the cruciform DNA. The polypeptide is Holliday junction branch migration complex subunit RuvA (Campylobacter hominis (strain ATCC BAA-381 / DSM 21671 / CCUG 45161 / LMG 19568 / NCTC 13146 / CH001A)).